We begin with the raw amino-acid sequence, 287 residues long: Inorganic pyrophosphatase (287 aa).

Residue Arg79 coordinates diphosphate. Mg(2+)-binding residues include Asp116, Asp121, and Asp153.

This sequence belongs to the PPase family. The cofactor is Mg(2+).

The protein resides in the cytoplasm. It catalyses the reaction diphosphate + H2O = 2 phosphate + H(+). This Zygosaccharomyces bailii protein is Inorganic pyrophosphatase (IPP1).